Consider the following 499-residue polypeptide: Probable 2-isopropylmalate synthase (499 aa).

Positions 5 to 256 constitute a Pyruvate carboxyltransferase domain; the sequence is VRIFDTTLRD…ELDVRTEMLV (252 aa). A divalent metal cation-binding residues include Asp-14, His-194, His-196, and Asn-230.

This sequence belongs to the alpha-IPM synthase/homocitrate synthase family. In terms of assembly, homodimer. The cofactor is a divalent metal cation.

It catalyses the reaction 3-methyl-2-oxobutanoate + acetyl-CoA + H2O = (2S)-2-isopropylmalate + CoA + H(+). It participates in amino-acid biosynthesis; L-leucine biosynthesis; L-leucine from 3-methyl-2-oxobutanoate: step 1/4. Its function is as follows. Catalyzes the condensation of the acetyl group of acetyl-CoA with 3-methyl-2-oxobutanoate (2-oxoisovalerate) to form 3-carboxy-3-hydroxy-4-methylpentanoate (2-isopropylmalate). This Methanopyrus kandleri (strain AV19 / DSM 6324 / JCM 9639 / NBRC 100938) protein is Probable 2-isopropylmalate synthase (leuA).